Reading from the N-terminus, the 797-residue chain is Probable DNA polymerase (797 aa).

Belongs to the DNA polymerase type-B family.

Its subcellular location is the mitochondrion. The catalysed reaction is DNA(n) + a 2'-deoxyribonucleoside 5'-triphosphate = DNA(n+1) + diphosphate. This chain is Probable DNA polymerase, found in Agaricus bitorquis (Pavement mushroom).